An 800-amino-acid chain; its full sequence is Ent-copalyl diphosphate synthase 2, chloroplastic (800 aa).

The transit peptide at 1–47 (MQMQVLTAASSLPRATLLRPAAAEPWRQSFLQLQARPIQRPGIMLHC) directs the protein to the chloroplast. The tract at residues 52–80 (QGQETRERRQLDDDEHARPPQGGDDDVAA) is disordered. Over residues 55–69 (ETRERRQLDDDEHAR) the composition is skewed to basic and acidic residues. K242 is a substrate binding site. Residues D374 and D376 each coordinate Mg(2+). Positions 374–377 (DIDD) match the DXDD motif motif. K461 contacts substrate.

It belongs to the terpene synthase family. Mg(2+) is required as a cofactor.

The protein localises to the plastid. The protein resides in the chloroplast. The catalysed reaction is (2E,6E,10E)-geranylgeranyl diphosphate = ent-copalyl diphosphate. It functions in the pathway secondary metabolite biosynthesis; terpenoid biosynthesis. Catalyzes the conversion of geranylgeranyl diphosphate to the phytoalexin precursor ent-copalyl diphosphate. This Oryza sativa subsp. japonica (Rice) protein is Ent-copalyl diphosphate synthase 2, chloroplastic.